The primary structure comprises 162 residues: 2-C-methyl-D-erythritol 2,4-cyclodiphosphate synthase (162 aa).

A divalent metal cation contacts are provided by Asp-12 and His-14. 4-CDP-2-C-methyl-D-erythritol 2-phosphate-binding positions include 12–14 and 38–39; these read DVH and HS. His-46 is a binding site for a divalent metal cation. 4-CDP-2-C-methyl-D-erythritol 2-phosphate is bound by residues 60 to 62, 65 to 69, and Arg-146; these read DIG and FPDTD.

The protein belongs to the IspF family. As to quaternary structure, homotrimer. The cofactor is a divalent metal cation.

It catalyses the reaction 4-CDP-2-C-methyl-D-erythritol 2-phosphate = 2-C-methyl-D-erythritol 2,4-cyclic diphosphate + CMP. It functions in the pathway isoprenoid biosynthesis; isopentenyl diphosphate biosynthesis via DXP pathway; isopentenyl diphosphate from 1-deoxy-D-xylulose 5-phosphate: step 4/6. Functionally, involved in the biosynthesis of isopentenyl diphosphate (IPP) and dimethylallyl diphosphate (DMAPP), two major building blocks of isoprenoid compounds. Catalyzes the conversion of 4-diphosphocytidyl-2-C-methyl-D-erythritol 2-phosphate (CDP-ME2P) to 2-C-methyl-D-erythritol 2,4-cyclodiphosphate (ME-CPP) with a corresponding release of cytidine 5-monophosphate (CMP). This Bordetella parapertussis (strain 12822 / ATCC BAA-587 / NCTC 13253) protein is 2-C-methyl-D-erythritol 2,4-cyclodiphosphate synthase.